Reading from the N-terminus, the 260-residue chain is Ribosomal RNA small subunit methyltransferase G (260 aa).

Residues Gly-94, Phe-99, 117 to 119 (DST), 145 to 146 (AE), and Arg-164 each bind S-adenosyl-L-methionine. The segment at 236–260 (APTPPPYPRSPGTPKRQPLGQSNRP) is disordered. A compositionally biased stretch (pro residues) spans 237–246 (PTPPPYPRSP).

It belongs to the methyltransferase superfamily. RNA methyltransferase RsmG family.

The protein resides in the cytoplasm. Specifically methylates the N7 position of a guanine in 16S rRNA. The chain is Ribosomal RNA small subunit methyltransferase G from Synechococcus sp. (strain JA-2-3B'a(2-13)) (Cyanobacteria bacterium Yellowstone B-Prime).